A 74-amino-acid polypeptide reads, in one-letter code: Protein kish-B (74 aa).

The first 22 residues, 1 to 22 (MTNVYSFDGILVFGLLFICTCA), serve as a signal peptide directing secretion. At 23–52 (YLKKVPRLNSWLLSEKKGVWGVFYKAAVIG) the chain is on the extracellular side. Residues 53 to 73 (TRLHVVVAASCLCMAFYLIFL) form a helical membrane-spanning segment. Lys74 is a topological domain (cytoplasmic).

Belongs to the KISH family.

It localises to the golgi apparatus membrane. Functionally, involved in the early part of the secretory pathway. The protein is Protein kish-B (tmem167b) of Danio rerio (Zebrafish).